The following is a 445-amino-acid chain: Trigger factor (445 aa).

In terms of domain architecture, PPIase FKBP-type spans 162–247 (GDQVTIDAIG…IKAVHTAEPT (86 aa)).

It belongs to the FKBP-type PPIase family. Tig subfamily.

It localises to the cytoplasm. It carries out the reaction [protein]-peptidylproline (omega=180) = [protein]-peptidylproline (omega=0). Involved in protein export. Acts as a chaperone by maintaining the newly synthesized protein in an open conformation. Functions as a peptidyl-prolyl cis-trans isomerase. This chain is Trigger factor, found in Rickettsia rickettsii (strain Sheila Smith).